The following is a 527-amino-acid chain: Berberine bridge enzyme-like 10 (527 aa).

The signal sequence occupies residues 1–20 (MEKLLVISLLLLISTSVTTS). A disulfide bond links Cys-32 and Cys-95. A glycan (N-linked (GlcNAc...) asparagine) is linked at Asn-53. Residues 73–248 (TTPKPISVVA…LGYKIQLVPV (176 aa)) form the FAD-binding PCMH-type domain. His-110 carries the post-translational modification Pros-8alpha-FAD histidine. Asn-137 and Asn-293 each carry an N-linked (GlcNAc...) asparagine glycan.

It belongs to the oxygen-dependent FAD-linked oxidoreductase family. It depends on FAD as a cofactor.

The protein localises to the secreted. The protein resides in the cell wall. The chain is Berberine bridge enzyme-like 10 from Arabidopsis thaliana (Mouse-ear cress).